Consider the following 514-residue polypeptide: 2,3-bisphosphoglycerate-independent phosphoglycerate mutase (514 aa).

Mn(2+) is bound by residues D14 and S64. The Phosphoserine intermediate role is filled by S64. Substrate-binding positions include H125, 155-156 (RD), R187, R193, 263-266 (RADR), and K337. Mn(2+) is bound by residues D404, H408, D445, H446, and H464.

Belongs to the BPG-independent phosphoglycerate mutase family. As to quaternary structure, monomer. Mn(2+) serves as cofactor.

The catalysed reaction is (2R)-2-phosphoglycerate = (2R)-3-phosphoglycerate. Its pathway is carbohydrate degradation; glycolysis; pyruvate from D-glyceraldehyde 3-phosphate: step 3/5. Its function is as follows. Catalyzes the interconversion of 2-phosphoglycerate and 3-phosphoglycerate. The sequence is that of 2,3-bisphosphoglycerate-independent phosphoglycerate mutase from Pseudoalteromonas translucida (strain TAC 125).